The chain runs to 678 residues: Beta-catenin-like protein hmp-2 (678 aa).

ARM repeat units lie at residues 153-192 (RGGP…NLLM), 280-319 (PSNK…RNLS), 320-359 (DSAT…NLTC), 362-403 (TRNK…HCTA), and 409-448 (EEAQ…NSAL).

It belongs to the beta-catenin family. As to quaternary structure, component of a core catenin-cadherin complex consisting of hmr-1, hmp-1 and hmp-2; the complex localizes to adherens junctions. Interacts with hmr-1; the interaction is direct. May interact with hmp-1. Interacts with frk-1. In terms of tissue distribution, epidermal cells.

It is found in the cell junction. The protein resides in the adherens junction. Its function is as follows. Required for cell migration during body enclosure and cell shape changes during body elongation. Plays a role in recruitment of the cadherin protein hmr-1 to adherens junctions. The protein is Beta-catenin-like protein hmp-2 (hmp-2) of Caenorhabditis elegans.